Consider the following 171-residue polypeptide: Protein BTG1 (171 aa).

Serine 159 is subject to Phosphoserine.

The protein belongs to the BTG family. As to quaternary structure, interacts with CNOT7 and CNOT8.

Functionally, anti-proliferative protein. The sequence is that of Protein BTG1 (Btg1) from Rattus norvegicus (Rat).